A 419-amino-acid chain; its full sequence is Enolase (419 aa).

Q161 is a (2R)-2-phosphoglycerate binding site. E205 acts as the Proton donor in catalysis. Positions 240, 283, and 309 each coordinate Mg(2+). (2R)-2-phosphoglycerate is bound by residues K334, R363, S364, and K385. The active-site Proton acceptor is K334.

It belongs to the enolase family. Mg(2+) serves as cofactor.

It localises to the cytoplasm. The protein resides in the secreted. Its subcellular location is the cell surface. It carries out the reaction (2R)-2-phosphoglycerate = phosphoenolpyruvate + H2O. The protein operates within carbohydrate degradation; glycolysis; pyruvate from D-glyceraldehyde 3-phosphate: step 4/5. Catalyzes the reversible conversion of 2-phosphoglycerate (2-PG) into phosphoenolpyruvate (PEP). It is essential for the degradation of carbohydrates via glycolysis. The protein is Enolase of Saccharolobus solfataricus (strain ATCC 35092 / DSM 1617 / JCM 11322 / P2) (Sulfolobus solfataricus).